Here is a 467-residue protein sequence, read N- to C-terminus: UDP-N-acetylmuramate--L-alanine ligase (467 aa).

114–120 (GTHGKTT) provides a ligand contact to ATP.

Belongs to the MurCDEF family.

It localises to the cytoplasm. The catalysed reaction is UDP-N-acetyl-alpha-D-muramate + L-alanine + ATP = UDP-N-acetyl-alpha-D-muramoyl-L-alanine + ADP + phosphate + H(+). Its pathway is cell wall biogenesis; peptidoglycan biosynthesis. Its function is as follows. Cell wall formation. This chain is UDP-N-acetylmuramate--L-alanine ligase, found in Rhodopseudomonas palustris (strain BisB5).